Here is a 295-residue protein sequence, read N- to C-terminus: Acetaldehyde dehydrogenase (295 aa).

Residue 11-14 (SGNI) participates in NAD(+) binding. Residue Cys-127 is the Acyl-thioester intermediate of the active site. NAD(+)-binding positions include 158–166 (SAGPGTRSN) and Asn-269.

This sequence belongs to the acetaldehyde dehydrogenase family.

The enzyme catalyses acetaldehyde + NAD(+) + CoA = acetyl-CoA + NADH + H(+). In Brevibacillus brevis (strain 47 / JCM 6285 / NBRC 100599), this protein is Acetaldehyde dehydrogenase.